Here is a 493-residue protein sequence, read N- to C-terminus: Alpha-amylase-related protein (493 aa).

The first 19 residues, 1–19 (MFKLALTLTLCLAGSLSLA), serve as a signal peptide directing secretion. Pyrrolidone carboxylic acid is present on glutamine 20. Cysteine 47 and cysteine 103 are disulfide-bonded. Ca(2+)-binding residues include asparagine 117, glutamine 168, and aspartate 177. Residues cysteine 156 and cysteine 170 are joined by a disulfide bond. Residue arginine 205 participates in chloride binding. Aspartate 207 serves as the catalytic Nucleophile. Residue histidine 211 coordinates Ca(2+). The active-site Proton donor is the glutamate 244. Positions 307 and 342 each coordinate chloride. 3 disulfides stabilise this stretch: cysteine 375–cysteine 381, cysteine 417–cysteine 440, and cysteine 447–cysteine 459.

The protein belongs to the glycosyl hydrolase 13 family. As to quaternary structure, monomer. Ca(2+) is required as a cofactor. Chloride serves as cofactor.

It is found in the secreted. It catalyses the reaction Endohydrolysis of (1-&gt;4)-alpha-D-glucosidic linkages in polysaccharides containing three or more (1-&gt;4)-alpha-linked D-glucose units.. In Drosophila yakuba (Fruit fly), this protein is Alpha-amylase-related protein (Amyrel).